A 1234-amino-acid polypeptide reads, in one-letter code: Anion exchange protein 2 (1234 aa).

A disordered region spans residues 1–239; the sequence is MSSAPRRPAS…YNLQERRRIG (239 aa). Over 1 to 704 the chain is Cytoplasmic; it reads MSSAPRRPAS…SDFRDALDPQ (704 aa). 2 stretches are compositionally biased toward basic and acidic residues: residues 39-49 and 58-75; these read LRTLGVERFEE and GGEE…EYHR. 2 stretches are compositionally biased toward basic residues: residues 76–85 and 94–110; these read QSSHHIHHPL and RRRK…RRRP. Residue Ser-113 is modified to Phosphoserine. Residues 120–133 are compositionally biased toward acidic residues; the sequence is TIEEGEEDEDEVGE. Phosphoserine is present on residues Ser-145, Ser-171, and Ser-173. The span at 207–216 shows a compositional bias: gly residues; the sequence is TAGGDDGGAA. Residue Ser-240 is modified to Phosphoserine. Thr-254 carries the phosphothreonine modification. Lys-271 carries the N6-methyllysine modification. Residues 287 to 315 form a disordered region; it reads RKNAKGSTQAAREGREPGPTPRARPRAPH. Position 440 is a phosphoserine (Ser-440). The disordered stretch occupies residues 446-467; sequence SLLGHHHAQGTESDPHVTEPLI. 4 helical membrane passes run 705 to 728, 734 to 771, 791 to 813, and 823 to 843; these read CLAA…GLLG, LIGV…LLVF, VWIG…SFLV, and IFAF…LIKI. The interval 705–1234 is membrane (anion exchange); the sequence is CLAAVIFIYF…DEYNEMPMPV (530 aa). At 844 to 893 the chain is on the extracellular side; sequence FQEHPLHGCSVSNDSEADSSSNNMTWAATTLAPDNSSASGQERPRGQPNT. Asn-856, Asn-866, and Asn-878 each carry an N-linked (GlcNAc...) asparagine glycan. Residues 894–911 traverse the membrane as a helical segment; that stretch reads ALLSLVLMAGTFFIAFFL. The Cytoplasmic segment spans residues 912–926; that stretch reads RKFKNSRFFPGRIRR. Helical transmembrane passes span 927 to 947, 981 to 1003, 1029 to 1050, 1084 to 1129, and 1156 to 1192; these read VIGD…DYSI, PFPV…LIFM, LLLI…LAAA, VTGL…IQFY, and MHLF…TVPL. Residue Cys-1166 is the site of S-palmitoyl cysteine attachment.

The protein belongs to the anion exchanger (TC 2.A.31) family. As to expression, expressed in the parotid and submandibular glands (at protein level). Expressed in the gastric mucosa (at protein level). Expressed in the choroid plexus epithelium (at protein level). Expressed in the liver and gallbladder.

Its subcellular location is the apical cell membrane. It is found in the basolateral cell membrane. The enzyme catalyses hydrogencarbonate(in) + chloride(out) = hydrogencarbonate(out) + chloride(in). Inhibited by 4,4'-diisothiocyanatostilbene-2,2'-disulfonic acid (DIDS). In terms of biological role, sodium-independent anion exchanger which mediates the electroneutral exchange of chloride for bicarbonate ions across the cell membrane. Plays an important role in osteoclast differentiation and function. Regulates bone resorption and calpain-dependent actin cytoskeleton organization in osteoclasts via anion exchange-dependent control of pH. Essential for intracellular pH regulation in CD8(+) T-cells upon CD3 stimulation, modulating CD8(+) T-cell responses. This Rattus norvegicus (Rat) protein is Anion exchange protein 2 (Slc4a2).